Consider the following 115-residue polypeptide: NAD(P)H-quinone oxidoreductase subunit M (115 aa).

Belongs to the complex I NdhM subunit family. As to quaternary structure, NDH-1 can be composed of about 15 different subunits; different subcomplexes with different compositions have been identified which probably have different functions.

Its subcellular location is the cellular thylakoid membrane. It catalyses the reaction a plastoquinone + NADH + (n+1) H(+)(in) = a plastoquinol + NAD(+) + n H(+)(out). The enzyme catalyses a plastoquinone + NADPH + (n+1) H(+)(in) = a plastoquinol + NADP(+) + n H(+)(out). Functionally, NDH-1 shuttles electrons from an unknown electron donor, via FMN and iron-sulfur (Fe-S) centers, to quinones in the respiratory and/or the photosynthetic chain. The immediate electron acceptor for the enzyme in this species is believed to be plastoquinone. Couples the redox reaction to proton translocation, and thus conserves the redox energy in a proton gradient. Cyanobacterial NDH-1 also plays a role in inorganic carbon-concentration. In Prochlorococcus marinus (strain AS9601), this protein is NAD(P)H-quinone oxidoreductase subunit M.